The sequence spans 274 residues: Oxidoreductase BOA17 (274 aa).

NADP(+) is bound by residues Leu-14, Thr-32, Asp-57, Asn-84, and Lys-117. Residues Ser-135 and Tyr-149 each act as proton donor in the active site. NADP(+) is bound by residues Tyr-149, Lys-153, Ile-182, and Thr-184. Residue Lys-153 is the Lowers pKa of active site Tyr of the active site.

This sequence belongs to the short-chain dehydrogenases/reductases (SDR) family.

Its pathway is polyketide biosynthesis. Oxidoreductase; part of the gene cluster B that mediates the biosynthesis of botcinic acid and its botcinin derivatives, acetate-derived polyketides that contribute to virulence when combined with the sesquiterpene botrydial. Botcinic acid and its derivatives have been shown to induce chlorosis and necrosis during host plant infection, but also have antifungal activities. Two polyketide synthases, BOA6 and BOA9, are involved in the biosynthesis of botcinins. BOA6 mediates the formation of the per-methylated tetraketide core by condensation of four units of malonyl-CoA with one unit of acetyl-CoA, which would be methylated in activated methylene groups to yield a bicyclic acid intermediate that could then either be converted to botrylactone derivatives or lose the starter acetate unit through a retro-Claisen type C-C bond cleavage to yield botcinin derivatives. The second polyketide synthase, BOA9, is probably required for the biosynthesis of the tetraketide side chain of botcinins. The methyltransferase (MT) domain within BOA6 is probably responsible for the incorporation of four methyl groups. The trans-enoyl reductase BOA5 might take over the enoyl reductase function of BOA6 that misses an ER domain. The monooxygenases BOA2, BOA3 and BOA4 might be involved in further hydroxylations at C4, C5 and C8, whereas BOA7, close to BOA9, could potentially be involved in the hydroxylation at C4 in the side chain of botcinins. The chain is Oxidoreductase BOA17 from Botryotinia fuckeliana (strain B05.10) (Noble rot fungus).